Consider the following 100-residue polypeptide: Urease subunit gamma (100 aa).

This sequence belongs to the urease gamma subunit family. In terms of assembly, heterotrimer of UreA (gamma), UreB (beta) and UreC (alpha) subunits. Three heterotrimers associate to form the active enzyme.

Its subcellular location is the cytoplasm. It catalyses the reaction urea + 2 H2O + H(+) = hydrogencarbonate + 2 NH4(+). The protein operates within nitrogen metabolism; urea degradation; CO(2) and NH(3) from urea (urease route): step 1/1. This is Urease subunit gamma from Pseudomonas putida (strain W619).